A 968-amino-acid polypeptide reads, in one-letter code: MPFTLGQRWISDTESELGLGTVVAMDARTVTLLFPSTGENRLYARSDSPVTRVMFNPGDTITSHEGWQLHIDEVKEENGLLVYVGTRLDTEETNVTLREVLLDSKLVFSKPQDRLFAGQIDRMDRFALRYRARKFQSEQYRMPYSGLRGQRTNLIPHQLNIAHDVGRRHAPRVLLADEVGLGKTIEAGMILHQQLLSGAAERVLIIVPETLQHQWLVEMLRRFNLRFALFDDERYTEAQHDAYNPFETEQLVICSLDFARRNKQRLEHLCDAEWDLLVVDEAHHLVWSTDAPSREYMAIEQLAERVPGVLLLTATPEQLGMESHFARLRLLDPNRFHDFEQFVEEQKNYRPVADAVAMLLAGNKLSNDELNRLGDLIGEQDIEPLLQAANSDRDDAQAARDELVSMLMDRHGTSRVLFRNTRNGVKGFPKRELHTVKLPLPTQYQTAIKVSGIMGARKSAEDRARDMLYPEQIYQEFEGDTGTWWNFDPRVEWLMGYLTSHRSQKVLVICAKATTALQLEQVLREREGIRAAVFHEGMSIIERDRAAAWFAEEDTGAQVLLCSEIGSEGRNFQFASNLVMFDLPFNPDLLEQRIGRLDRIGQAHDIQIHVPYLEKTAQSVLVRWYHEGLDAFEHTCPTGRAIYDSAYASLINYLAAPEETDGFDDLIKSCREQHEALKAQLEQGRDRLLEIHSNGGEKAQQLAQSIEEQDDDTNLIAFAMNLFDIVGINQDDRGDNLIVLTPSDHMLVPDFPGLPEDGCTITFERDVALSREDAQFITWEHPLIRNGLDLILSGDTGSSTISLLKNKALPVGTLLVELVYVVEAQAPKQLQLNRFLPPTPVRMLLDKNGNNLAAQVEFETFNRQLSAVNRHTGSKLVNAVQQDVYAILQLGETQIEQSARALIDNARREADEKLSGELSRLEALRAVNPNIRDDELAAIDSNRQQVLESLNQAGWRLDALRLIVVTHQ.

Residues 164–334 (DVGRRHAPRV…FARLRLLDPN (171 aa)) form the Helicase ATP-binding domain. An ATP-binding site is contributed by 177-184 (DEVGLGKT). The DEAH box motif lies at 280–283 (DEAH). Positions 490-685 (RVEWLMGYLT…ALKAQLEQGR (196 aa)) constitute a Helicase C-terminal domain.

Belongs to the SNF2/RAD54 helicase family. RapA subfamily. In terms of assembly, interacts with the RNAP. Has a higher affinity for the core RNAP than for the holoenzyme. Its ATPase activity is stimulated by binding to RNAP.

Functionally, transcription regulator that activates transcription by stimulating RNA polymerase (RNAP) recycling in case of stress conditions such as supercoiled DNA or high salt concentrations. Probably acts by releasing the RNAP, when it is trapped or immobilized on tightly supercoiled DNA. Does not activate transcription on linear DNA. Probably not involved in DNA repair. The chain is RNA polymerase-associated protein RapA from Salmonella newport (strain SL254).